Reading from the N-terminus, the 360-residue chain is UDP-N-acetylglucosamine--N-acetylmuramyl-(pentapeptide) pyrophosphoryl-undecaprenol N-acetylglucosamine transferase (360 aa).

UDP-N-acetyl-alpha-D-glucosamine is bound by residues serine 198 and glutamine 289.

This sequence belongs to the glycosyltransferase 28 family. MurG subfamily.

The protein resides in the cell membrane. It carries out the reaction Mur2Ac(oyl-L-Ala-gamma-D-Glu-L-Lys-D-Ala-D-Ala)-di-trans,octa-cis-undecaprenyl diphosphate + UDP-N-acetyl-alpha-D-glucosamine = beta-D-GlcNAc-(1-&gt;4)-Mur2Ac(oyl-L-Ala-gamma-D-Glu-L-Lys-D-Ala-D-Ala)-di-trans,octa-cis-undecaprenyl diphosphate + UDP + H(+). The protein operates within cell wall biogenesis; peptidoglycan biosynthesis. In terms of biological role, cell wall formation. Catalyzes the transfer of a GlcNAc subunit on undecaprenyl-pyrophosphoryl-MurNAc-pentapeptide (lipid intermediate I) to form undecaprenyl-pyrophosphoryl-MurNAc-(pentapeptide)GlcNAc (lipid intermediate II). In Streptococcus pyogenes serotype M49 (strain NZ131), this protein is UDP-N-acetylglucosamine--N-acetylmuramyl-(pentapeptide) pyrophosphoryl-undecaprenol N-acetylglucosamine transferase.